A 219-amino-acid chain; its full sequence is MYVLFLLSWVLVAGALPAMKKSAIPVLEAIERCRVLGVDIEAYGSKDEILATTKESNNLRECFDILVSADQTALTEVAMLGVLMKRLQTRQALGEPIYELLSKGLPKGAGAKAVTNGNMSGVGQALLRRHKRQVMPLGEVGEDPGKRARKRRLGLPIGEPGEDVGKRMRQRQQGRARQNYNTWLRKYYAWYQRAQRYYARKRGARPAAAAKPAAKKPAV.

Residues 1–15 form the signal peptide; the sequence is MYVLFLLSWVLVAGA. N-linked (GlcNAc...) asparagine glycosylation occurs at Asn-118. Residues 138 to 174 form a disordered region; that stretch reads GEVGEDPGKRARKRRLGLPIGEPGEDVGKRMRQRQQG.

In terms of tissue distribution, component of the acid-insoluble and acid-soluble organic matrix of calcified layers of the shell (at protein level).

Its subcellular location is the secreted. This is an uncharacterized protein from Lottia gigantea (Giant owl limpet).